Reading from the N-terminus, the 1018-residue chain is Fibronectin-binding protein A (1018 aa).

The signal sequence occupies residues 1–36 (MKNNLRYGIRKHKLGAASVFLGTMIVVGMGQDKEAA). A YSIRK-G/S signaling motif motif is present at residues 7 to 18 (YGIRKHKLGAAS). The ligand-binding A region stretch occupies residues 37-511 (ASEQKTTTVE…SNKANGNEKN (475 aa)). Disordered stretches follow at residues 38–61 (SEQK…SETQ) and 78–195 (ATVT…ETGT). Composition is skewed to polar residues over residues 39–61 (EQKT…SETQ) and 78–92 (ATVT…QVTT). Over residues 112–126 (TVKEEVVKEEAKPQV) the composition is skewed to basic and acidic residues. Over residues 129-139 (TTQSQDNSGDQ) the composition is skewed to polar residues. Residues 194–511 (GTDVTSKVTV…SNKANGNEKN (318 aa)) are fibrinogen/elastin/tropoelastin-binding. A fibronectin-binding region spans residues 512–872 (GPIIQNNKFE…EGQQTIEEDT (361 aa)). A B-1 repeat occupies 545 to 574 (EEYDSSTLDIDYHTAIDGGGGYVDGYIETI). A 2 X approximate tandem repeats region spans residues 545-604 (EEYDSSTLDIDYHTAIDGGGGYVDGYIETIEETDSSAIDIDYHTAVDSEAGHVGGYTESS). The B-2 repeat unit spans residues 575–604 (EETDSSAIDIDYHTAVDSEAGHVGGYTESS). Disordered stretches follow at residues 595 to 622 (GHVG…NSKH), 740 to 813 (LGYE…DIDF), and 827 to 997 (EIIE…GMLF). Residues 745 to 782 (GQNSGNQSFEEDTEEDKPKYEQGGNIVDIDFDSVPQIH) form a D-1 repeat. The segment at 745–878 (GQNSGNQSFE…EEDTTPPIVP (134 aa)) is 4 X approximate tandem repeats, D-3 repeat has more fibronectin-binding activity. A D-2 repeat occupies 783-820 (GQNKGNQSFEEDTEKDKPKYEHGGNIIDIDFDSVPHIH). A D-3 repeat occupies 821-859 (GFNKHTEIIEEDTNKDKPSYQFGGHNSVDFEEDTLPKVS). A compositionally biased stretch (basic and acidic residues) spans 827–838 (EIIEEDTNKDKP). The D-4; truncated repeat unit spans residues 860 to 878 (GQNEGQQTIEEDTTPPIVP). Residues 875–938 (PIVPPTPPTP…PAEPGKPVPP (64 aa)) are compositionally biased toward pro residues. WR repeat units follow at residues 879–892 (PTPP…EPET), 893–906 (PTPP…EPET), 907–920 (PTPP…EPET), 921–934 (PTPP…EPGK), and 935–948 (PVPP…KPSK). The 5 X tandem repeats, Pro-rich (WR) stretch occupies residues 879–948 (PTPPTPEVPS…AKEEPKKPSK (70 aa)). The short motif at 982–986 (LPETG) is the LPXTG sorting signal element. At threonine 985 the chain carries Pentaglycyl murein peptidoglycan amidated threonine. Positions 986 to 1018 (GGEESTNKGMLFGGLFSILGLALLRRNKKNHKA) are cleaved as a propeptide — removed by sortase.

The protein localises to the secreted. It is found in the cell wall. Possesses multiple, substituting fibronectin (Fn) binding regions, each capable of conferring adherence to both soluble and immobilized forms of Fn. This confers to S.aureus the ability to invade endothelial cells both in vivo and in vitro, without requiring additional factors, although in a slow and inefficient way through actin rearrangements in host cells. This invasion process is mediated by integrin alpha-5/beta-1. Promotes bacterial attachment to both soluble and immobilized forms of fibrinogen (Fg) by means of a unique binding site localized within the 17 C-terminal residues of the gamma-chain of human Fg. Both plasma proteins (Fn and Fg) function as a bridge between bacterium and host cell. Promotes attachment to immobilized elastin peptides in a dose-dependent and saturable manner. Promotes attachment to both full-length and segments of immobilized human tropoelastin at multiple sites in a dose and pH-dependent manner. Promotes adherence to and aggregation of activated platelets independently of other S.aureus surface molecules. Is a critical mediator implicated in the induction of experimental endocarditis in rats with catheter-induced aortic vegetations, promoting both colonization and persistence of the bacterium into the host. The protein is Fibronectin-binding protein A (fnbA) of Staphylococcus aureus (strain NCTC 8325 / PS 47).